Here is a 785-residue protein sequence, read N- to C-terminus: Endonuclease MutS2 (785 aa).

Residue 335–342 (GPNTGGKT) coordinates ATP. The 76-residue stretch at 710 to 785 (LDLRGERYED…GNGVTIVEFK (76 aa)) folds into the Smr domain.

It belongs to the DNA mismatch repair MutS family. MutS2 subfamily. Homodimer. Binds to stalled ribosomes, contacting rRNA.

Endonuclease that is involved in the suppression of homologous recombination and thus may have a key role in the control of bacterial genetic diversity. In terms of biological role, acts as a ribosome collision sensor, splitting the ribosome into its 2 subunits. Detects stalled/collided 70S ribosomes which it binds and splits by an ATP-hydrolysis driven conformational change. Acts upstream of the ribosome quality control system (RQC), a ribosome-associated complex that mediates the extraction of incompletely synthesized nascent chains from stalled ribosomes and their subsequent degradation. Probably generates substrates for RQC. This is Endonuclease MutS2 from Listeria innocua serovar 6a (strain ATCC BAA-680 / CLIP 11262).